We begin with the raw amino-acid sequence, 551 residues long: CTP synthase (551 aa).

Residues 1–265 are amidoligase domain; it reads MTRYLFITGG…DHIVAEKWGL (265 aa). A CTP-binding site is contributed by Ser13. Ser13 is a UTP binding site. Residues 14 to 19 and Asp71 contribute to the ATP site; that span reads SLGKGI. Mg(2+) is bound by residues Asp71 and Glu139. CTP-binding positions include 146–148, 186–191, and Lys222; these read DIE and KTKPTQ. UTP-binding positions include 186–191 and Lys222; that span reads KTKPTQ. Residues 290–541 form the Glutamine amidotransferase type-1 domain; the sequence is TVAMVGKYVD…LRAAIAHRDG (252 aa). Residue Gly351 participates in L-glutamine binding. The Nucleophile; for glutamine hydrolysis role is filled by Cys378. Residues 379-382, Glu402, and Arg469 contribute to the L-glutamine site; that span reads LGMQ. Catalysis depends on residues His514 and Glu516.

The protein belongs to the CTP synthase family. In terms of assembly, homotetramer.

The enzyme catalyses UTP + L-glutamine + ATP + H2O = CTP + L-glutamate + ADP + phosphate + 2 H(+). The catalysed reaction is L-glutamine + H2O = L-glutamate + NH4(+). It catalyses the reaction UTP + NH4(+) + ATP = CTP + ADP + phosphate + 2 H(+). The protein operates within pyrimidine metabolism; CTP biosynthesis via de novo pathway; CTP from UDP: step 2/2. Its activity is regulated as follows. Allosterically activated by GTP, when glutamine is the substrate; GTP has no effect on the reaction when ammonia is the substrate. The allosteric effector GTP functions by stabilizing the protein conformation that binds the tetrahedral intermediate(s) formed during glutamine hydrolysis. Inhibited by the product CTP, via allosteric rather than competitive inhibition. Its function is as follows. Catalyzes the ATP-dependent amination of UTP to CTP with either L-glutamine or ammonia as the source of nitrogen. Regulates intracellular CTP levels through interactions with the four ribonucleotide triphosphates. The sequence is that of CTP synthase from Halorhodospira halophila (strain DSM 244 / SL1) (Ectothiorhodospira halophila (strain DSM 244 / SL1)).